A 24-amino-acid polypeptide reads, in one-letter code: M-poneritoxin-Ng1e (24 aa).

Expressed by the venom gland.

It localises to the secreted. The protein resides in the target cell membrane. Functionally, has a broad spectrum of activity against both Gram-positive and Gram-negative bacteria and S.cerevisiae. Has insecticidal and hemolytic activities. May act by disrupting the integrity of the bacterial cell membrane. This is M-poneritoxin-Ng1e from Neoponera goeldii (Ponerine ant).